The primary structure comprises 342 residues: S-adenosylmethionine:tRNA ribosyltransferase-isomerase (342 aa).

This sequence belongs to the QueA family. Monomer.

It is found in the cytoplasm. The enzyme catalyses 7-aminomethyl-7-carbaguanosine(34) in tRNA + S-adenosyl-L-methionine = epoxyqueuosine(34) in tRNA + adenine + L-methionine + 2 H(+). It participates in tRNA modification; tRNA-queuosine biosynthesis. Transfers and isomerizes the ribose moiety from AdoMet to the 7-aminomethyl group of 7-deazaguanine (preQ1-tRNA) to give epoxyqueuosine (oQ-tRNA). The protein is S-adenosylmethionine:tRNA ribosyltransferase-isomerase of Zymomonas mobilis subsp. mobilis (strain ATCC 31821 / ZM4 / CP4).